The following is a 637-amino-acid chain: GTPase-activating protein GYP1 (637 aa).

Residues 1–17 (MGVRSAAKEMHERDHNS) show a composition bias toward basic and acidic residues. 2 disordered regions span residues 1–152 (MGVR…GDRY) and 187–233 (RTLS…NDSK). Over residues 18-27 (DSSSLVTSLM) the composition is skewed to polar residues. Residues 28-45 (KSWRISSASSSKKPSLYK) show a composition bias toward low complexity. Over residues 46–59 (MNTTESTSLPSGYA) the composition is skewed to polar residues. Ser-69 bears the Phosphoserine mark. Polar residues-rich tracts occupy residues 79–91 (QQAS…NSYS) and 98–107 (PTLSTASNES). The segment covering 115–127 (RQHHQRHHHHQQP) has biased composition (basic residues). 2 stretches are compositionally biased toward low complexity: residues 128–142 (RHSS…CSNS) and 187–207 (RTLS…MGTS). The segment covering 208-223 (AVRNSSSSFTYPQLPQ) has biased composition (polar residues). Phosphoserine is present on Ser-250. Residues 280 to 508 (GIPKIHRPVV…RMWDTYLSET (229 aa)) form the Rab-GAP TBC domain. Positions 543-564 (DFQSPTTALSNMTPNNAVEDSG) are disordered.

The protein resides in the golgi apparatus. Its subcellular location is the golgi stack. Its function is as follows. GTPase-activating protein (GAP) that stimulates specifically the intrinsic GTPase activity of Ypt/Rab-type GTPases YPT1 and YPT7. Functions on the Golgi as a negative regulator of YPT1. Functions on the vacuole as a negative regulator of YPT7. It is also active on SEC4 and YPT51. Provides a catalytic arginine (arginine finger) and glutamine (glutamine finger) in trans to accelerate the GTP hydrolysis rate of the substrate GTPase. The polypeptide is GTPase-activating protein GYP1 (GYP1) (Saccharomyces cerevisiae (strain ATCC 204508 / S288c) (Baker's yeast)).